Here is a 404-residue protein sequence, read N- to C-terminus: Lupus La protein homolog (404 aa).

The HTH La-type RNA-binding domain occupies 7–99 (NEKMAALEAK…RRSPSKPLPE (93 aa)). 2 positions are modified to phosphoserine: serine 92 and serine 94. Residues 111-187 (RSVYIKGFPT…TDLLILFKED (77 aa)) form the RRM domain. Lysine 116 carries the post-translational modification N6-acetyllysine. Threonine 120 carries the phosphothreonine modification. Position 128 is an N6-acetyllysine (lysine 128). Serine 225 is modified (phosphoserine). Positions 227–348 (EEKIGCLLKF…KGKGNKAAQA (122 aa)) constitute a xRRM domain. An N6-acetyllysine mark is found at lysine 328 and lysine 341. Basic residues predominate over residues 329 to 342 (WKSKGRRFKGKGKG). Positions 329-404 (WKSKGRRFKG…QKTENGAGDQ (76 aa)) are disordered. The span at 343–354 (NKAAQAGSAKGK) shows a compositional bias: low complexity. The residue at position 360 (lysine 360) is an N6-acetyllysine. Phosphothreonine is present on threonine 362. Serine 366 bears the Phosphoserine mark. The span at 381–391 (RAREETDKEPP) shows a compositional bias: basic and acidic residues.

In terms of assembly, interacts with DDX15. May interact with RUFY1. Post-translationally, phosphorylated in the C-terminal part of the protein.

The protein localises to the nucleus. In terms of biological role, binds to the 3' poly(U) terminus of nascent RNA polymerase III transcripts, protecting them from exonuclease digestion and facilitating their folding and maturation. This chain is Lupus La protein homolog (SSB), found in Bos taurus (Bovine).